A 146-amino-acid chain; its full sequence is VHLTADEKAAVSGLWGKVNVDEVGGEALGRLLVVYPWTQRFFTSFGDLSNAAAVMGNSKVKAHGKKVLNSFGEGLKNVDNLKGTFASLSELHCDKLHVDPENFRLLGNVLVIVLARHFGKEFTPQVQGAFQKLALGVATALAHKYH.

Residue valine 1 is modified to N-acetylvaline. The 145-residue stretch at 2-146 folds into the Globin domain; that stretch reads HLTADEKAAV…VATALAHKYH (145 aa). Serine 44 is modified (phosphoserine). Residue lysine 59 is modified to N6-acetyllysine. A heme b-binding site is contributed by histidine 63. Lysine 82 is subject to N6-acetyllysine. Histidine 92 serves as a coordination point for heme b. Cysteine 93 carries the post-translational modification S-nitrosocysteine. The residue at position 144 (lysine 144) is an N6-acetyllysine.

The protein belongs to the globin family. In terms of assembly, heterotetramer of two alpha chains and two beta chains. In terms of tissue distribution, red blood cells.

Its function is as follows. Involved in oxygen transport from the lung to the various peripheral tissues. This chain is Hemoglobin subunit beta (HBB), found in Myotis velifer (Mouse-eared bat).